The sequence spans 340 residues: DNA-directed RNA polymerase subunit alpha (340 aa).

The tract at residues 1 to 238 (MVDPIVTKNW…EQLSIFINFD (238 aa)) is alpha N-terminal domain (alpha-NTD). The segment at 255-340 (LNENLFRSVD…AAPQGGAPKV (86 aa)) is alpha C-terminal domain (alpha-CTD).

It belongs to the RNA polymerase alpha chain family. In terms of assembly, homodimer. The RNAP catalytic core consists of 2 alpha, 1 beta, 1 beta' and 1 omega subunit. When a sigma factor is associated with the core the holoenzyme is formed, which can initiate transcription.

It carries out the reaction RNA(n) + a ribonucleoside 5'-triphosphate = RNA(n+1) + diphosphate. In terms of biological role, DNA-dependent RNA polymerase catalyzes the transcription of DNA into RNA using the four ribonucleoside triphosphates as substrates. In Anaeromyxobacter dehalogenans (strain 2CP-1 / ATCC BAA-258), this protein is DNA-directed RNA polymerase subunit alpha.